The primary structure comprises 449 residues: Capsid protein (449 aa).

A DNA-binding region spans residues 1-43 (MARRARRPRGRFYSFRRGRWHHLKRLRRRYKFRHRRRQRYRRR). Residues 6–47 (RRPRGRFYSFRRGRWHHLKRLRRRYKFRHRRRQRYRRRAFRK) form a nuclear localization signals region.

The protein belongs to the gyrovirus capsid protein family. In terms of assembly, homomultimer (Potential). Interacts with Rep; this interaction relocates Rep into the nucleus.

Its subcellular location is the host nucleus. It is found in the virion. Its function is as follows. Self-assembles to form the virion icosahedral capsid with a T=1 symmetry. This very small capsid (25 nm in diameter) allows the virus to be very stable in the environment and resistant to some disinfectants, including detergents. Essential for the initial attachment to host receptors. After attachment, the virus is endocytosed and traffics to the nucleus. The capsid protein binds and transports the viral genome and Rep across the nuclear envelope. The protein is Capsid protein (VP1) of Gallus gallus (Chicken).